Consider the following 393-residue polypeptide: MTTRTSGYVREEFVAPPEHTFTLPDSTIVRSIEQDGTVEVFLAQSSAPIAIFSPHARTLRVSPHGIVNDDRAVSSPAPCFTTAEPALSTEDAWAALYALWMRRTEKDVLPLVLDSRTESLKPYLVQTGLAFSPPDAQSEFELLVVRAAFWQGAGAPVNRHWLQNMVPDPSTSIAPFPAITSFTRTEHVLTTHPLRPPKPAPGAVIYSRYIHTVNQQLTLTHIDANNLEHFAAYSRWQNSERVNIGWRERGPDEKHRKYLADRLADLHSMGVIIAWDGQLAGYGEVCWVKEDPMGTYVGGLGDYDQGIHILIGEEKFRGRHRFTAVMTSLYHACFLREPRTEVVVSEPRADLPIVPRLIAYLPQELNREFELPHKRAVYTVVRRERFFQAAMLY.

It belongs to the lysine N-acyltransferase mbtK family.

The protein operates within siderophore biosynthesis; ferrichrome biosynthesis. Functionally, L-ornithine N(5)-monooxygenase; part of the siderophore biosynthetic pathway. Omphalotus olearius produces ferrichrome A, but no other siderophore has been detected. Ferrichrome A consists of a hexapeptide ring made up of one glycine, two serine, and three N(5)-hydroxyornithine amino acid residues, the latter acylated by trans-(alpha-methyl)-glutaconic acid residues. The biosynthesis of ferrichrome A depends on the hydroxylation of ornithine to N(5)-hydroxyornithine, catalyzed by the monooxygenase omo1. The second step, the acylation of N(5)-hydroxy-L-ornithine is probably catalyzed by the N-acyltransferase ato1. Finally, assembly of ferrichrome A is catalyzed by the nonribosomal peptide synthase (NRPS) fso1. The polypeptide is Acyltransferase ato1 (Omphalotus olearius (Jack o'lantern)).